A 210-amino-acid polypeptide reads, in one-letter code: RNA chaperone ProQ (210 aa).

The disordered stretch occupies residues 118 to 146 (KAAKPEKKRPARRVAAKGQHAKETTTNKA). A compositionally biased stretch (basic residues) spans 123-132 (EKKRPARRVA).

It belongs to the ProQ family.

Its subcellular location is the cytoplasm. Its function is as follows. RNA chaperone with significant RNA binding, RNA strand exchange and RNA duplexing activities. The sequence is that of RNA chaperone ProQ from Pasteurella multocida (strain Pm70).